The chain runs to 391 residues: Nutrient and stress factor 1 (391 aa).

Residues 1–27 (MENTTNRNTAGVLTSSNGNFATNSVAA) are compositionally biased toward polar residues. The disordered stretch occupies residues 1–37 (MENTTNRNTAGVLTSSNGNFATNSVAASTPKRSKSAR). 2 C2H2-type zinc fingers span residues 41 to 66 (FKCT…IRKH) and 72 to 95 (FQCP…ESVH). The disordered stretch occupies residues 91 to 149 (RESVHAHKNHHSTSSHQRKPSSSSLSSSSSASSSSSASSSTSYSDPYRKTNINSGNMPM). The span at 96–109 (AHKNHHSTSSHQRK) shows a compositional bias: basic residues. The span at 110–134 (PSSSSLSSSSSASSSSSASSSTSYS) shows a compositional bias: low complexity. Serine 162 and serine 163 each carry phosphoserine. Positions 326–374 (AFSQPPNGNKNNNMSSSKNGGKGGENFKNTDDRNDNNNKKRSETLSESD) are disordered. A compositionally biased stretch (low complexity) spans 332 to 344 (NGNKNNNMSSSKN). A compositionally biased stretch (basic and acidic residues) spans 353–369 (KNTDDRNDNNNKKRSET).

It is found in the nucleus. Functionally, transcription factor that participates in the transcriptional activation of glucose-repressed genes during exponential growth in non-fermentable carbon conditions. Also involved in salt-stress response. The protein is Nutrient and stress factor 1 (USV1) of Saccharomyces cerevisiae (strain ATCC 204508 / S288c) (Baker's yeast).